Consider the following 148-residue polypeptide: MNNKSLIFLAIKSLDIQNQTCGTINTVSLNFDDQLNQLIIDSRIQSDKDLKIIISKVLNSASQSSLHDSNLANNYNRRFLYYFKKMSFFQYIEKSVYENSILIENLGIVGLYLLYLLIECNGLFRIWVYYKIYNFEHLIKLVETKNNL.

It localises to the plastid. It is found in the chloroplast. This is an uncharacterized protein from Porphyra purpurea (Red seaweed).